Here is a 368-residue protein sequence, read N- to C-terminus: Alanine racemase (368 aa).

Catalysis depends on Lys40, which acts as the Proton acceptor; specific for D-alanine. Lys40 carries the post-translational modification N6-(pyridoxal phosphate)lysine. Arg134 serves as a coordination point for substrate. Residue Tyr263 is the Proton acceptor; specific for L-alanine of the active site. Met310 is a binding site for substrate.

This sequence belongs to the alanine racemase family. Requires pyridoxal 5'-phosphate as cofactor.

The catalysed reaction is L-alanine = D-alanine. It functions in the pathway amino-acid biosynthesis; D-alanine biosynthesis; D-alanine from L-alanine: step 1/1. Catalyzes the interconversion of L-alanine and D-alanine. May also act on other amino acids. The protein is Alanine racemase (alr) of Listeria monocytogenes serotype 4b (strain F2365).